A 480-amino-acid chain; its full sequence is NADH-quinone oxidoreductase subunit N (480 aa).

Helical transmembrane passes span 11-31 (LLPE…GVFA), 38-58 (LVAA…AGLL), 76-96 (FALY…IAAA), 105-125 (APEY…LVSM), 128-148 (LFGV…MVAF), 163-183 (LITG…IYGV), 195-215 (AFGE…ISGL), 240-260 (AAFL…RILL), 270-290 (WTAL…LLAL), 298-318 (MLAY…AALQ), 329-349 (VMIY…TIDL), 368-388 (AAAM…SGFF), 407-427 (VAVA…FGII), and 453-473 (VYAM…LAAL).

It belongs to the complex I subunit 2 family. NDH-1 is composed of 14 different subunits. Subunits NuoA, H, J, K, L, M, N constitute the membrane sector of the complex.

The protein resides in the cell membrane. It catalyses the reaction a quinone + NADH + 5 H(+)(in) = a quinol + NAD(+) + 4 H(+)(out). NDH-1 shuttles electrons from NADH, via FMN and iron-sulfur (Fe-S) centers, to quinones in the respiratory chain. The immediate electron acceptor for the enzyme in this species is believed to be a menaquinone. Couples the redox reaction to proton translocation (for every two electrons transferred, four hydrogen ions are translocated across the cytoplasmic membrane), and thus conserves the redox energy in a proton gradient. This chain is NADH-quinone oxidoreductase subunit N, found in Rubrobacter xylanophilus (strain DSM 9941 / JCM 11954 / NBRC 16129 / PRD-1).